The chain runs to 418 residues: uncharacterized protein (418 aa).

This is an uncharacterized protein from Ictalurid herpesvirus 1 (strain Auburn) (IcHV-1).